Consider the following 522-residue polypeptide: Zinc finger protein STOP1 homolog (522 aa).

Polar residues-rich tracts occupy residues 1–12 (MDSGLGRSSETS) and 19–40 (MASN…SSMD). 2 disordered regions span residues 1 to 43 (MDSG…DQPP) and 234 to 260 (CGGE…EREN). A compositionally biased stretch (basic and acidic residues) spans 244–260 (MEDHDVKESDDGGEREN). The C2H2-type 1 zinc finger occupies 282-304 (HFCLICGKGFKRDANLRMHMRGH). The C2H2-type 2; atypical zinc finger occupies 390 to 421 (KHCGRDKWLCSCGTTFSRKDKLFGHVALFQGH).

It is found in the nucleus. Its function is as follows. Probable transcription factor that may be involved in aluminum tolerance. The protein is Zinc finger protein STOP1 homolog of Oryza sativa subsp. japonica (Rice).